Here is a 334-residue protein sequence, read N- to C-terminus: Methionyl-tRNA formyltransferase (334 aa).

111–114 (SILP) provides a ligand contact to (6S)-5,6,7,8-tetrahydrofolate.

It belongs to the Fmt family.

It catalyses the reaction L-methionyl-tRNA(fMet) + (6R)-10-formyltetrahydrofolate = N-formyl-L-methionyl-tRNA(fMet) + (6S)-5,6,7,8-tetrahydrofolate + H(+). Functionally, attaches a formyl group to the free amino group of methionyl-tRNA(fMet). The formyl group appears to play a dual role in the initiator identity of N-formylmethionyl-tRNA by promoting its recognition by IF2 and preventing the misappropriation of this tRNA by the elongation apparatus. The chain is Methionyl-tRNA formyltransferase from Gloeothece citriformis (strain PCC 7424) (Cyanothece sp. (strain PCC 7424)).